The following is a 1101-amino-acid chain: Isoleucine--tRNA ligase (1101 aa).

Positions 50–60 (PFANGLPHYGH) match the 'HIGH' region motif. A 'KMSKS' region motif is present at residues 629–633 (KLSKR). Position 632 (Lys-632) interacts with ATP.

Belongs to the class-I aminoacyl-tRNA synthetase family. IleS type 2 subfamily. As to quaternary structure, monomer. Requires Zn(2+) as cofactor.

Its subcellular location is the cytoplasm. It catalyses the reaction tRNA(Ile) + L-isoleucine + ATP = L-isoleucyl-tRNA(Ile) + AMP + diphosphate. In terms of biological role, catalyzes the attachment of isoleucine to tRNA(Ile). As IleRS can inadvertently accommodate and process structurally similar amino acids such as valine, to avoid such errors it has two additional distinct tRNA(Ile)-dependent editing activities. One activity is designated as 'pretransfer' editing and involves the hydrolysis of activated Val-AMP. The other activity is designated 'posttransfer' editing and involves deacylation of mischarged Val-tRNA(Ile). The chain is Isoleucine--tRNA ligase from Anaplasma marginale (strain St. Maries).